A 102-amino-acid polypeptide reads, in one-letter code: Cysteine-rich venom protein VAR9 (102 aa).

A signal peptide spans methionine 1–glycine 19. The region spanning asparagine 41–lysine 80 is the SCP domain.

It belongs to the CRISP family. In terms of processing, contains 8 disulfide bonds. As to expression, expressed by the venom gland.

The protein resides in the secreted. In terms of biological role, blocks ryanodine receptors, and potassium channels. The chain is Cysteine-rich venom protein VAR9 from Varanus varius (Lace monitor lizard).